The primary structure comprises 240 residues: MADDWESAADSEIILQNAASTVNKWEGEDDDDDVKESWEDEEEKKDEENEKPTITDVPVKTKPSKALKAKLEEQARLEEEKEAKRLASLTPEEKLAEKLRLQKIQEDSDLNHALDTFGVTRAETNGNGLDSFNPETKEQFKEFGSALSWKVGQYRESAEFPQFVEDLVRGLCIHLSAADIKKVKMSVEILHSEKLKMEKAIAKKAAGKNKGKATLRTESDDIDDYKKYGNDFSEDYDDFM.

The interval 1 to 66 (MADDWESAAD…VPVKTKPSKA (66 aa)) is disordered. The segment covering 27–45 (GEDDDDDVKESWEDEEEKK) has biased composition (acidic residues).

It belongs to the eIF-3 subunit J family. Component of the eukaryotic translation initiation factor 3 (eIF-3) complex. The eIF-3 complex interacts with pix.

It localises to the cytoplasm. Component of the eukaryotic translation initiation factor 3 (eIF-3) complex, which is involved in protein synthesis of a specialized repertoire of mRNAs and, together with other initiation factors, stimulates binding of mRNA and methionyl-tRNAi to the 40S ribosome. The eIF-3 complex specifically targets and initiates translation of a subset of mRNAs involved in cell proliferation. The polypeptide is Eukaryotic translation initiation factor 3 subunit J (Drosophila persimilis (Fruit fly)).